A 765-amino-acid chain; its full sequence is 5-methyltetrahydropteroyltriglutamate--homocysteine methyltransferase (765 aa).

Residues 18–21 (REWK) and lysine 114 each bind 5-methyltetrahydropteroyltri-L-glutamate. L-homocysteine contacts are provided by residues 437-439 (IGS) and glutamate 490. Residues 437-439 (IGS) and glutamate 490 contribute to the L-methionine site. Tryptophan 567 is a binding site for 5-methyltetrahydropteroyltri-L-glutamate. Aspartate 605 contributes to the L-homocysteine binding site. L-methionine is bound at residue aspartate 605. Residue glutamate 611 coordinates 5-methyltetrahydropteroyltri-L-glutamate. Zn(2+)-binding residues include histidine 647, cysteine 649, and glutamate 671. Histidine 700 (proton donor) is an active-site residue. Cysteine 732 lines the Zn(2+) pocket.

The protein belongs to the vitamin-B12 independent methionine synthase family. Zn(2+) serves as cofactor.

It catalyses the reaction 5-methyltetrahydropteroyltri-L-glutamate + L-homocysteine = tetrahydropteroyltri-L-glutamate + L-methionine. The protein operates within amino-acid biosynthesis; L-methionine biosynthesis via de novo pathway; L-methionine from L-homocysteine (MetE route): step 1/1. Functionally, catalyzes the transfer of a methyl group from 5-methyltetrahydrofolate to homocysteine resulting in methionine formation. The sequence is that of 5-methyltetrahydropteroyltriglutamate--homocysteine methyltransferase from Listeria welshimeri serovar 6b (strain ATCC 35897 / DSM 20650 / CCUG 15529 / CIP 8149 / NCTC 11857 / SLCC 5334 / V8).